The following is a 118-amino-acid chain: Large ribosomal subunit protein bL17 (118 aa).

It belongs to the bacterial ribosomal protein bL17 family. In terms of assembly, part of the 50S ribosomal subunit. Contacts protein L32.

The polypeptide is Large ribosomal subunit protein bL17 (Aster yellows witches'-broom phytoplasma (strain AYWB)).